The chain runs to 258 residues: Acyl-[acyl-carrier-protein]--UDP-N-acetylglucosamine O-acyltransferase (258 aa).

This sequence belongs to the transferase hexapeptide repeat family. LpxA subfamily. As to quaternary structure, homotrimer.

The protein resides in the cytoplasm. The catalysed reaction is a (3R)-hydroxyacyl-[ACP] + UDP-N-acetyl-alpha-D-glucosamine = a UDP-3-O-[(3R)-3-hydroxyacyl]-N-acetyl-alpha-D-glucosamine + holo-[ACP]. Its pathway is glycolipid biosynthesis; lipid IV(A) biosynthesis; lipid IV(A) from (3R)-3-hydroxytetradecanoyl-[acyl-carrier-protein] and UDP-N-acetyl-alpha-D-glucosamine: step 1/6. Involved in the biosynthesis of lipid A, a phosphorylated glycolipid that anchors the lipopolysaccharide to the outer membrane of the cell. The protein is Acyl-[acyl-carrier-protein]--UDP-N-acetylglucosamine O-acyltransferase of Saccharophagus degradans (strain 2-40 / ATCC 43961 / DSM 17024).